We begin with the raw amino-acid sequence, 342 residues long: MQTLQTTSLRVSENQLFILDQQALPQEKRWLAADNVALLVDHIHALRVRGAPLIGLSASLLLALLAQRGLNRDALQQALETLRAARPTAVNLMNNLDRMKQALAREDYPQALEAEALRLVEEDKQLCDRIAEAGSALVKPGSRLLTHCNTGGLATAGVGTALGVIALAHRQGKVANVWVDETRPLLQGGRLTAWELGELGVPYQLITDSMAASLMAQGQVDAVWVGADRIAANGDVANKIGTYSLAVLAHYHQIPFYVAAPQTTLDRYCPNGAAIPIEQRAAAEVTGVAGSFGAVQWAPMGAAVYNPAFDVTPAGLVSGWVLDSGVVTPAQVAAGAFAPDNG.

Substrate contacts are provided by residues 49–51, Arg86, and Gln187; that span reads RGA. The active-site Proton donor is the Asp228. A substrate-binding site is contributed by 238–239; that stretch reads NK.

It belongs to the eIF-2B alpha/beta/delta subunits family. MtnA subfamily.

The enzyme catalyses 5-(methylsulfanyl)-alpha-D-ribose 1-phosphate = 5-(methylsulfanyl)-D-ribulose 1-phosphate. The protein operates within amino-acid biosynthesis; L-methionine biosynthesis via salvage pathway; L-methionine from S-methyl-5-thio-alpha-D-ribose 1-phosphate: step 1/6. Catalyzes the interconversion of methylthioribose-1-phosphate (MTR-1-P) into methylthioribulose-1-phosphate (MTRu-1-P). In Klebsiella pneumoniae (strain 342), this protein is Methylthioribose-1-phosphate isomerase.